A 418-amino-acid chain; its full sequence is Serine hydroxymethyltransferase 2 (418 aa).

(6S)-5,6,7,8-tetrahydrofolate is bound by residues L121 and G125 to L127. The residue at position 230 (K230) is an N6-(pyridoxal phosphate)lysine. Residue S355–F357 participates in (6S)-5,6,7,8-tetrahydrofolate binding.

This sequence belongs to the SHMT family. Homodimer. It depends on pyridoxal 5'-phosphate as a cofactor.

The protein localises to the cytoplasm. The enzyme catalyses (6R)-5,10-methylene-5,6,7,8-tetrahydrofolate + glycine + H2O = (6S)-5,6,7,8-tetrahydrofolate + L-serine. It functions in the pathway one-carbon metabolism; tetrahydrofolate interconversion. Its pathway is amino-acid biosynthesis; glycine biosynthesis; glycine from L-serine: step 1/1. Functionally, catalyzes the reversible interconversion of serine and glycine with tetrahydrofolate (THF) serving as the one-carbon carrier. This reaction serves as the major source of one-carbon groups required for the biosynthesis of purines, thymidylate, methionine, and other important biomolecules. Also exhibits THF-independent aldolase activity toward beta-hydroxyamino acids, producing glycine and aldehydes, via a retro-aldol mechanism. This chain is Serine hydroxymethyltransferase 2, found in Pseudomonas aeruginosa (strain ATCC 15692 / DSM 22644 / CIP 104116 / JCM 14847 / LMG 12228 / 1C / PRS 101 / PAO1).